Consider the following 452-residue polypeptide: tRNA modification GTPase MnmE (452 aa).

The (6S)-5-formyl-5,6,7,8-tetrahydrofolate site is built by Arg21, Glu78, and Lys118. In terms of domain architecture, TrmE-type G spans 214 to 375; the sequence is GMKVVIAGRP…LREHLKKSMG (162 aa). Asn224 contributes to the K(+) binding site. Residues 224 to 229, 243 to 249, and 268 to 271 each bind GTP; these read NAGKSS, TNIAGTT, and DTAG. Mg(2+) is bound at residue Ser228. Positions 243, 245, and 248 each coordinate K(+). Thr249 contributes to the Mg(2+) binding site. Lys452 serves as a coordination point for (6S)-5-formyl-5,6,7,8-tetrahydrofolate.

This sequence belongs to the TRAFAC class TrmE-Era-EngA-EngB-Septin-like GTPase superfamily. TrmE GTPase family. In terms of assembly, homodimer. Heterotetramer of two MnmE and two MnmG subunits. It depends on K(+) as a cofactor.

The protein resides in the cytoplasm. Functionally, exhibits a very high intrinsic GTPase hydrolysis rate. Involved in the addition of a carboxymethylaminomethyl (cmnm) group at the wobble position (U34) of certain tRNAs, forming tRNA-cmnm(5)s(2)U34. In Actinobacillus pleuropneumoniae serotype 5b (strain L20), this protein is tRNA modification GTPase MnmE.